Here is a 471-residue protein sequence, read N- to C-terminus: UDP-N-acetylmuramate--L-alanine ligase (471 aa).

ATP is bound at residue 112-118 (GTHGKTT).

Belongs to the MurCDEF family.

Its subcellular location is the cytoplasm. It carries out the reaction UDP-N-acetyl-alpha-D-muramate + L-alanine + ATP = UDP-N-acetyl-alpha-D-muramoyl-L-alanine + ADP + phosphate + H(+). It participates in cell wall biogenesis; peptidoglycan biosynthesis. Its function is as follows. Cell wall formation. The sequence is that of UDP-N-acetylmuramate--L-alanine ligase from Aromatoleum aromaticum (strain DSM 19018 / LMG 30748 / EbN1) (Azoarcus sp. (strain EbN1)).